We begin with the raw amino-acid sequence, 1327 residues long: MRCGIVVNVTGPPPTIDRRYHDAVIVGLDNVVDKATRVHAAAWTKFLDDYLTRRPQRTGEDHCPLTHDDYRRFLAGKPDGVADFLAARGIRLPPGSPTDLTDDTVYGLQNLERQTFLQLLNTGVPEGKSIASFARRLQVAGVRVAAHTSHRNYGHTLDATGLAEVFAVFVDGAVTAELGLPAEPNPAGLIETAKRLGANPGRCVVIDSCQTGLRAGRNGGFALVIAVDAHGDAENLLSSGADAVVADLAAVTVGSGDAAISTIPDALQVYSQLKRLLTGRRPAVFLDFDGTLSDIVERPEAATLVDGAAEALRALAAQCPVAVISGRDLADVRNRVKVDGLWLAGSHGFELVAPDGSHHQNAAATAAIDGLAEAAAQLADALREIAGAVVEHKRFAVAVHYRNVADDSVDNLIAAVRRLGHAAGLRVTTGRKVVELRPDIAWDKGKALDWIGERLGPAEVGPDLRLPIYIGDDLTDEDAFDAVRFTGVGIVVRHNEHGDRRSAATFRLECPYTVCQFLSQLACDLQEAVQHDDPWTLVFHGYDPGQERLREALCAVGNGYLGSRGCAPESAESEAHYPGTYVAGVYNQLTDHIEGCTVDNESLVNLPNWLSLTFRIDGGAWFNVDTVELLSYRQTFDLRRATLTRSLRFRDAGGRVTTMTQERFASMNRPNLVALQTRIESENWSGTVDFRSLVDGGVHNTLVDRYRQLSSQHLTTAEIEVLADSVLLRTQTSQSGIAIAVAARSTLWRDGQRVDAQYRVARDTNRGGHDIQVTLSAGQSVTLEKVATIFTSRDAATLTAAISAQRCLGEAGRYAELCQQHVRAWARLWERCAIDLTGNTEELRLVRLHLLHLLQTISPHTAELDAGVPARGLNGEAYRGHVFWDALFVAPVLSLRMPKVARSLLDYRYRRLPAARRAAHRAGHLGAMYPWQSGSDGSEVSQQLHLNPRSGRWTPDPSDRAHHVGLAVAYNAWHYYQVTGDRQYLVDCGAELLVEIARFWVGLAKLDDSRGRYLIRGVIGPDEFHSGYPGNEYDGIDNNAYTNVMAVWVILRAMEALDLLPLTDRRHLIEKLGLTTQERDQWDDVSRRMFVPFHDGVISQFEGYSELAELDWDHYRHRYGNIQRLDRILEAEGDSVNNYQASKQADALMLLYLLSSDELIGLLARLGYRFAPTQIPGTVDYYLARTSDGSTLSAVVHAWVLARANRSNAMEYFRQVLRSDIADVQGGTTQEGIHLAAMAGSIDLLQRCYSGLELRDDRLVLSPQWPEALGPLEFPFVYRRHQLSLRISGRSATLTAESGDAEPIEVECRGHVQRLRCGHTIEVGCSR.

884–885 (WD) contributes to the substrate binding site. Catalysis depends on Glu1023, which acts as the Proton donor. 1143 to 1144 (KQ) is a binding site for substrate.

This sequence in the N-terminal section; belongs to the trehalose phosphatase family. It in the C-terminal section; belongs to the glycosyl hydrolase 65 family.

This is an uncharacterized protein from Mycobacterium tuberculosis (strain CDC 1551 / Oshkosh).